The primary structure comprises 515 residues: Histidine ammonia-lyase (515 aa).

Residues 142–144 constitute a cross-link (5-imidazolinone (Ala-Gly)); sequence ASG. 2,3-didehydroalanine (Ser) is present on Ser-143.

This sequence belongs to the PAL/histidase family. Post-translationally, contains an active site 4-methylidene-imidazol-5-one (MIO), which is formed autocatalytically by cyclization and dehydration of residues Ala-Ser-Gly.

Its subcellular location is the cytoplasm. It catalyses the reaction L-histidine = trans-urocanate + NH4(+). It functions in the pathway amino-acid degradation; L-histidine degradation into L-glutamate; N-formimidoyl-L-glutamate from L-histidine: step 1/3. This Bradyrhizobium sp. (strain BTAi1 / ATCC BAA-1182) protein is Histidine ammonia-lyase.